Here is a 165-residue protein sequence, read N- to C-terminus: Transcriptional repressor NrdR (165 aa).

A zinc finger lies at 3-34 (CPFCRHPDSRVVDSREADEGQAIRRRRSCPEC). In terms of domain architecture, ATP-cone spans 46-136 (LSVVKRSGVT…VYKSFSSAAD (91 aa)).

The protein belongs to the NrdR family. Zn(2+) serves as cofactor.

Its function is as follows. Negatively regulates transcription of bacterial ribonucleotide reductase nrd genes and operons by binding to NrdR-boxes. The chain is Transcriptional repressor NrdR from Rhodococcus erythropolis (strain PR4 / NBRC 100887).